A 203-amino-acid chain; its full sequence is HTH-type transcriptional regulator CymR (203 aa).

The region spanning 13–73 is the HTH tetR-type domain; the sequence is METQGKLIAA…ATFEWLYEQI (61 aa). The segment at residues 36–55 is a DNA-binding region (H-T-H motif); sequence RIADVPGAAGVSRGAQSHHF.

Its function is as follows. Involved in the repression of the cym and cmt operons which are responsible of the p-cymene degradation. This is HTH-type transcriptional regulator CymR from Pseudomonas putida (Arthrobacter siderocapsulatus).